Reading from the N-terminus, the 430-residue chain is Serine--tRNA ligase (430 aa).

An L-serine-binding site is contributed by Thr-235–Glu-237. Residues Arg-266–Glu-268 and Val-282 each bind ATP. Residue Glu-289 participates in L-serine binding. Glu-353–Ser-356 is a binding site for ATP. Position 389 (Ser-389) interacts with L-serine.

Belongs to the class-II aminoacyl-tRNA synthetase family. Type-1 seryl-tRNA synthetase subfamily. Homodimer. The tRNA molecule binds across the dimer.

Its subcellular location is the cytoplasm. The catalysed reaction is tRNA(Ser) + L-serine + ATP = L-seryl-tRNA(Ser) + AMP + diphosphate + H(+). The enzyme catalyses tRNA(Sec) + L-serine + ATP = L-seryl-tRNA(Sec) + AMP + diphosphate + H(+). The protein operates within aminoacyl-tRNA biosynthesis; selenocysteinyl-tRNA(Sec) biosynthesis; L-seryl-tRNA(Sec) from L-serine and tRNA(Sec): step 1/1. Catalyzes the attachment of serine to tRNA(Ser). Is also able to aminoacylate tRNA(Sec) with serine, to form the misacylated tRNA L-seryl-tRNA(Sec), which will be further converted into selenocysteinyl-tRNA(Sec). The sequence is that of Serine--tRNA ligase from Chlorobium luteolum (strain DSM 273 / BCRC 81028 / 2530) (Pelodictyon luteolum).